Consider the following 452-residue polypeptide: Phosphoglucosamine mutase (452 aa).

Residue Ser-103 is the Phosphoserine intermediate of the active site. Mg(2+)-binding residues include Ser-103, Asp-244, Asp-246, and Asp-248. Position 103 is a phosphoserine (Ser-103).

Belongs to the phosphohexose mutase family. Mg(2+) serves as cofactor. Post-translationally, activated by phosphorylation.

The catalysed reaction is alpha-D-glucosamine 1-phosphate = D-glucosamine 6-phosphate. Functionally, catalyzes the conversion of glucosamine-6-phosphate to glucosamine-1-phosphate. The protein is Phosphoglucosamine mutase of Rhodospirillum rubrum (strain ATCC 11170 / ATH 1.1.1 / DSM 467 / LMG 4362 / NCIMB 8255 / S1).